A 372-amino-acid chain; its full sequence is Adaptive-response sensory kinase SasA (372 aa).

In terms of domain architecture, Histidine kinase spans 147–360; that stretch reads MVAHELRTPL…CFHFTVPVWQ (214 aa). Position 150 is a phosphohistidine; by autocatalysis (H150).

As to quaternary structure, homooligomerizes. Interacts with KaiC. Participates in the KaiBC complex, whose core is composed of a KaiC homohexamer and 6 KaiB.

The catalysed reaction is ATP + protein L-histidine = ADP + protein N-phospho-L-histidine.. Functionally, member of the two-component regulatory system SasA/RpaA involved in genome-wide circadian gene expression. One of several clock output pathways. Participates in the Kai clock protein complex, the main circadian regulator in cyanobacteria, via its interaction with KaiC. KaiC enhances the autophosphorylation activity of SasA, which then transfers its phosphate group to RpaA to activate it. In addition to its output function, recruits fold-shifted KaiB (KaiB(fs)) to KaiC to cooperatively form the KaiB(6):KaiC(6) complex (independent of SasA kinase activity). Required for robustness of the circadian rhythm of gene expression and is involved in clock output, also required for adaptation to light/dark cycles. The sequence is that of Adaptive-response sensory kinase SasA from Prochlorococcus marinus (strain AS9601).